A 142-amino-acid polypeptide reads, in one-letter code: Large ribosomal subunit protein uL11 (142 aa).

This sequence belongs to the universal ribosomal protein uL11 family. As to quaternary structure, part of the ribosomal stalk of the 50S ribosomal subunit. Interacts with L10 and the large rRNA to form the base of the stalk. L10 forms an elongated spine to which L12 dimers bind in a sequential fashion forming a multimeric L10(L12)X complex. In terms of processing, one or more lysine residues are methylated.

Functionally, forms part of the ribosomal stalk which helps the ribosome interact with GTP-bound translation factors. The protein is Large ribosomal subunit protein uL11 of Mycobacterium leprae (strain Br4923).